Reading from the N-terminus, the 321-residue chain is Genome polyprotein (321 aa).

The Cytoplasmic segment spans residues 1-52; it reads RNLGKVIDTLTCGFADLMGYIPLVGAPLGGAARALAHGVRVLEDGVNYATGN. The segment at 6 to 57 is interaction with APOA2; sequence VIDTLTCGFADLMGYIPLVGAPLGGAARALAHGVRVLEDGVNYATGNLPGCS. Residues 48–51 form an important for lipid droplets localization region; the sequence is YATG. The helical transmembrane segment at 53 to 73 threads the bilayer; sequence LPGCSFSLFLLALLSCLTVPA. Positions 62-75 are cleaved as a propeptide — ER anchor for the core protein, removed in mature form by host signal peptidase; it reads LLALLSCLTVPASA. Residues 74-242 lie on the Lumenal side of the membrane; it reads SAYQVRNSTG…AGAHWGVLAG (169 aa). Asparagine 80, asparagine 93, and asparagine 118 each carry an N-linked (GlcNAc...) asparagine; by host glycan. The segment at 149–180 is important for fusion; sequence LVGSATLCSALYVGDLCGSIFLVGQLFTFSPR. The N-linked (GlcNAc...) asparagine; by host glycan is linked to asparagine 189. Residues 243-263 form a helical membrane-spanning segment; the sequence is IAYFSMVGNWAKVLVVLLLFA. The Lumenal portion of the chain corresponds to 264-321; it reads GVDAETTVTGGSAAHGALGIASLFNQGARQNIQLINTNGSWHINSTALNCNDSLNTGW. An HVR1 region spans residues 268 to 294; that stretch reads ETTVTGGSAAHGALGIASLFNQGARQN. N-linked (GlcNAc...) (high mannose) asparagine; by host glycans are attached at residues asparagine 301, asparagine 307, and asparagine 314.

The protein belongs to the hepacivirus polyprotein family. Homooligomer. Interacts with E1 (via C-terminus). Interacts with the non-structural protein 5A. Interacts (via N-terminus) with host STAT1 (via SH2 domain); this interaction results in decreased STAT1 phosphorylation and ubiquitin-mediated proteasome-dependent STAT1 degradation, leading to decreased IFN-stimulated gene transcription. Interacts with host STAT3; this interaction constitutively activates STAT3. Interacts with host LTBR receptor. Interacts with host TNFRSF1A receptor and possibly induces apoptosis. Interacts with host HNRPK. Interacts with host YWHAE. Interacts with host UBE3A/E6AP. Interacts with host DDX3X. Interacts with host APOA2. Interacts with host RXRA protein. Interacts with host SP110 isoform 3/Sp110b; this interaction sequesters the transcriptional corepressor SP110 away from the nucleus. Interacts with host CREB3 nuclear transcription protein; this interaction triggers cell transformation. Interacts with host ACY3. Interacts with host C1QR1. Interacts with host RBM24; this interaction, which enhances the interaction of the mature core protein with 5'-UTR, may inhibit viral translation and favor replication. Interacts with host EIF2AK2/PKR; this interaction induces the autophosphorylation of EIF2AK2. Part of the viral assembly initiation complex composed of NS2, E1, E2, NS3, NS4A, NS5A and the mature core protein. In terms of assembly, forms a heterodimer with envelope glycoprotein E2. Interacts with mature core protein. Interacts with protease NS2. The heterodimer E1/E2 interacts with host CLDN1; this interaction plays a role in viral entry into host cell. Interacts with host SPSB2 (via C-terminus). Part of the viral assembly initiation complex composed of NS2, E1, E2, NS3, NS4A, NS5A and the mature core protein. As to quaternary structure, forms a heterodimer with envelope glycoprotein E1. Interacts with host CD81 and SCARB1 receptors; these interactions play a role in viral entry into host cell. Interacts with host EIF2AK2/PKR; this interaction inhibits EIF2AK2 and probably allows the virus to evade the innate immune response. Interacts with host CD209/DC-SIGN and CLEC4M/DC-SIGNR. Interact with host SPCS1; this interaction is essential for viral particle assembly. Interacts with protease NS2. The heterodimer E1/E2 interacts with host CLDN1; this interaction plays a role in viral entry into host cell. Part of the viral assembly initiation complex composed of NS2, E1, E2, NS3, NS4A, NS5A and the mature core protein. Specific enzymatic cleavages in vivo yield mature proteins. The structural proteins, core, E1, E2 and p7 are produced by proteolytic processing by host signal peptidases. The core protein precursor is synthesized as a 23 kDa, which is retained in the ER membrane through the hydrophobic signal peptide. Cleavage by the signal peptidase releases the 21 kDa mature core protein. The cleavage of the core protein precursor occurs between aminoacids 176 and 188 but the exact cleavage site is not known. Some degraded forms of the core protein appear as well during the course of infection. The other proteins (p7, NS2, NS3, NS4A, NS4B, NS5A and NS5B) are cleaved by the viral proteases. Autoprocessing between NS2 and NS3 is mediated by the NS2 cysteine protease catalytic domain and regulated by the NS3 N-terminal domain. In terms of processing, phosphorylated by host PKC and PKA. Post-translationally, ubiquitinated; mediated by UBE3A and leading to core protein subsequent proteasomal degradation. Highly N-glycosylated.

Its subcellular location is the host endoplasmic reticulum membrane. The protein resides in the host mitochondrion membrane. The protein localises to the virion. It localises to the host cytoplasm. It is found in the host nucleus. Its subcellular location is the host lipid droplet. The protein resides in the virion membrane. Its function is as follows. Packages viral RNA to form a viral nucleocapsid, and promotes virion budding. Participates in the viral particle production as a result of its interaction with the non-structural protein 5A. Binds RNA and may function as a RNA chaperone to induce the RNA structural rearrangements taking place during virus replication. Modulates viral translation initiation by interacting with viral IRES and 40S ribosomal subunit. Affects various cell signaling pathways, host immunity and lipid metabolism. Prevents the establishment of cellular antiviral state by blocking the interferon-alpha/beta (IFN-alpha/beta) and IFN-gamma signaling pathways and by blocking the formation of phosphorylated STAT1 and promoting ubiquitin-mediated proteasome-dependent degradation of STAT1. Activates STAT3 leading to cellular transformation. Regulates the activity of cellular genes, including c-myc and c-fos. May repress the promoter of p53, and sequester CREB3 and SP110 isoform 3/Sp110b in the cytoplasm. Represses cell cycle negative regulating factor CDKN1A, thereby interrupting an important check point of normal cell cycle regulation. Targets transcription factors involved in the regulation of inflammatory responses and in the immune response: suppresses TNF-induced NF-kappa-B activation, and activates AP-1. Binds to dendritic cells (DCs) via C1QR1, resulting in down-regulation of T-lymphocytes proliferation. Alters lipid metabolism by interacting with hepatocellular proteins involved in lipid accumulation and storage. Induces up-regulation of FAS promoter activity, and thereby contributes to the increased triglyceride accumulation in hepatocytes (steatosis). In terms of biological role, forms a heterodimer with envelope glycoprotein E2, which mediates virus attachment to the host cell, virion internalization through clathrin-dependent endocytosis and fusion with host membrane. Fusion with the host cell is most likely mediated by both E1 and E2, through conformational rearrangements of the heterodimer required for fusion rather than a classical class II fusion mechanism. E1/E2 heterodimer binds host apolipoproteins such as APOB and ApoE thereby forming a lipo-viro-particle (LVP). APOE associated to the LVP allows the initial virus attachment to cell surface receptors such as the heparan sulfate proteoglycans (HSPGs), syndecan-1 (SDC1), syndecan-1 (SDC2), the low-density lipoprotein receptor (LDLR) and scavenger receptor class B type I (SCARB1). The cholesterol transfer activity of SCARB1 allows E2 exposure and binding of E2 to SCARB1 and the tetraspanin CD81. E1/E2 heterodimer binding on CD81 activates the epithelial growth factor receptor (EGFR) signaling pathway. Diffusion of the complex E1-E2-EGFR-SCARB1-CD81 to the cell lateral membrane allows further interaction with Claudin 1 (CLDN1) and occludin (OCLN) to finally trigger HCV entry. Functionally, forms a heterodimer with envelope glycoprotein E1, which mediates virus attachment to the host cell, virion internalization through clathrin-dependent endocytosis and fusion with host membrane. Fusion with the host cell is most likely mediated by both E1 and E2, through conformational rearrangements of the heterodimer required for fusion rather than a classical class II fusion mechanism. The interaction between envelope glycoprotein E2 and host apolipoprotein E/APOE allows the proper assembly, maturation and infectivity of the viral particles. This interaction is probably promoted via the up-regulation of cellular autophagy by the virus. E1/E2 heterodimer binds host apolipoproteins such as APOB and APOE thereby forming a lipo-viro-particle (LVP). APOE associated to the LVP allows the initial virus attachment to cell surface receptors such as the heparan sulfate proteoglycans (HSPGs), syndecan-1 (SDC1), syndecan-1 (SDC2), the low-density lipoprotein receptor (LDLR) and scavenger receptor class B type I (SCARB1). The cholesterol transfer activity of SCARB1 allows E2 exposure and binding of E2 to SCARB1 and the tetraspanin CD81. E1/E2 heterodimer binding on CD81 activates the epithelial growth factor receptor (EGFR) signaling pathway. Diffusion of the complex E1-E2-EGFR-SCARB1-CD81 to the cell lateral membrane allows further interaction with Claudin 1 (CLDN1) and occludin (OCLN) to finally trigger HCV entry. Inhibits host EIF2AK2/PKR activation, preventing the establishment of an antiviral state. Viral ligand for CD209/DC-SIGN and CLEC4M/DC-SIGNR, which are respectively found on dendritic cells (DCs), and on liver sinusoidal endothelial cells and macrophage-like cells of lymph node sinuses. These interactions allow the capture of circulating HCV particles by these cells and subsequent facilitated transmission to permissive cells such as hepatocytes and lymphocyte subpopulations. In Homo sapiens (Human), this protein is Genome polyprotein.